The chain runs to 478 residues: MAGAAAASAAAAAVASGISARPVAPRPSPSRARAPRSVVRAAISVEKGEKAYTVEKSEEIFNAAKELMPGGVNSPVRAFKSVGGQPIVFDSVKGSRMWDVDGNEYIDYVGSWGPAIIGHADDTVNAALIETLKKGTSFGAPCVLENVLAEMVISAVPSIEMVRFVNSGTEACMGALRLVRAFTGREKILKFEGCYHGHADSFLVKAGSGVATLGLPDSPGVPKGATSETLTAPYNDVEAVKKLFEENKGQIAAVFLEPVVGNAGFIPPQPGFLNALRDLTKQDGALLVFDEVMTGFRLAYGGAQEYFGITPDVSTLGKIIGGGLPVGAYGGRKDIMEMVAPAGPMYQAGTLSGNPLAMTAGIHTLKRLMEPGTYDYLDKITGDLVRGVLDAGAKTGHEMCGGHIRGMFGFFFTAGPVHNFGDAKKSDTAKFGRFYRGMLEEGVYLAPSQFEAGFTSLAHTSQDIEKTVEAAAKVLRRI.

A chloroplast-targeting transit peptide spans Met-1 to Arg-40. The segment at Ala-15–Arg-36 is disordered. Lys-318 is modified (N6-(pyridoxal phosphate)lysine).

This sequence belongs to the class-III pyridoxal-phosphate-dependent aminotransferase family. HemL subfamily. Homodimer. Requires pyridoxal 5'-phosphate as cofactor.

The protein resides in the plastid. It is found in the chloroplast. The enzyme catalyses (S)-4-amino-5-oxopentanoate = 5-aminolevulinate. It functions in the pathway porphyrin-containing compound metabolism; protoporphyrin-IX biosynthesis; 5-aminolevulinate from L-glutamyl-tRNA(Glu): step 2/2. The protein operates within porphyrin-containing compound metabolism; chlorophyll biosynthesis. The chain is Glutamate-1-semialdehyde 2,1-aminomutase, chloroplastic (GSA) from Oryza sativa subsp. japonica (Rice).